A 261-amino-acid polypeptide reads, in one-letter code: uncharacterized protein (261 aa).

Positions 1–22 (MGYSKRFALYISVMILIFAIAG) are cleaved as a signal peptide. The N-palmitoyl cysteine moiety is linked to residue cysteine 23. The S-diacylglycerol cysteine moiety is linked to residue cysteine 23.

This sequence belongs to the staphylococcal tandem lipoprotein family.

The protein localises to the cell membrane. This is an uncharacterized protein from Staphylococcus aureus (strain N315).